The chain runs to 316 residues: Ribosomal protein L11 methyltransferase (316 aa).

Residues Thr-160, Gly-181, Asp-203, and Asn-246 each contribute to the S-adenosyl-L-methionine site.

Belongs to the methyltransferase superfamily. PrmA family.

The protein resides in the cytoplasm. It catalyses the reaction L-lysyl-[protein] + 3 S-adenosyl-L-methionine = N(6),N(6),N(6)-trimethyl-L-lysyl-[protein] + 3 S-adenosyl-L-homocysteine + 3 H(+). In terms of biological role, methylates ribosomal protein L11. The sequence is that of Ribosomal protein L11 methyltransferase from Heliobacterium modesticaldum (strain ATCC 51547 / Ice1).